The primary structure comprises 240 residues: Orotidine 5'-phosphate decarboxylase (240 aa).

Residues Asp16, Lys37, 64–73 (DLKFHDIPTT), Thr128, Arg190, Gln199, Gly219, and Arg220 each bind substrate. Lys66 serves as the catalytic Proton donor.

The protein belongs to the OMP decarboxylase family. Type 1 subfamily. In terms of assembly, homodimer.

The enzyme catalyses orotidine 5'-phosphate + H(+) = UMP + CO2. Its pathway is pyrimidine metabolism; UMP biosynthesis via de novo pathway; UMP from orotate: step 2/2. Catalyzes the decarboxylation of orotidine 5'-monophosphate (OMP) to uridine 5'-monophosphate (UMP). In Prochlorococcus marinus (strain SARG / CCMP1375 / SS120), this protein is Orotidine 5'-phosphate decarboxylase.